Consider the following 482-residue polypeptide: tRNA sulfurtransferase (482 aa).

The 105-residue stretch at 61 to 165 folds into the THUMP domain; that stretch reads LTIRDALTRI…DDRLLLIKGR (105 aa). ATP is bound by residues 183 to 184, Lys-265, Gly-287, and Gln-296; that span reads LI. Cys-344 and Cys-456 are disulfide-bonded. The region spanning 404-482 is the Rhodanese domain; sequence FGPNDVILDI…GFNNVKVYRP (79 aa). Residue Cys-456 is the Cysteine persulfide intermediate of the active site.

Belongs to the ThiI family.

It is found in the cytoplasm. The catalysed reaction is [ThiI sulfur-carrier protein]-S-sulfanyl-L-cysteine + a uridine in tRNA + 2 reduced [2Fe-2S]-[ferredoxin] + ATP + H(+) = [ThiI sulfur-carrier protein]-L-cysteine + a 4-thiouridine in tRNA + 2 oxidized [2Fe-2S]-[ferredoxin] + AMP + diphosphate. The enzyme catalyses [ThiS sulfur-carrier protein]-C-terminal Gly-Gly-AMP + S-sulfanyl-L-cysteinyl-[cysteine desulfurase] + AH2 = [ThiS sulfur-carrier protein]-C-terminal-Gly-aminoethanethioate + L-cysteinyl-[cysteine desulfurase] + A + AMP + 2 H(+). It participates in cofactor biosynthesis; thiamine diphosphate biosynthesis. Catalyzes the ATP-dependent transfer of a sulfur to tRNA to produce 4-thiouridine in position 8 of tRNAs, which functions as a near-UV photosensor. Also catalyzes the transfer of sulfur to the sulfur carrier protein ThiS, forming ThiS-thiocarboxylate. This is a step in the synthesis of thiazole, in the thiamine biosynthesis pathway. The sulfur is donated as persulfide by IscS. The sequence is that of tRNA sulfurtransferase from Shigella flexneri.